The sequence spans 469 residues: Glutamate--tRNA ligase (469 aa).

Residues 11 to 21 (PSPTGFIHLGN) carry the 'HIGH' region motif. The short motif at 243-247 (KMSKR) is the 'KMSKS' region element. Residue Lys246 coordinates ATP.

Belongs to the class-I aminoacyl-tRNA synthetase family. Glutamate--tRNA ligase type 1 subfamily. Monomer.

It is found in the cytoplasm. The catalysed reaction is tRNA(Glu) + L-glutamate + ATP = L-glutamyl-tRNA(Glu) + AMP + diphosphate. Catalyzes the attachment of glutamate to tRNA(Glu) in a two-step reaction: glutamate is first activated by ATP to form Glu-AMP and then transferred to the acceptor end of tRNA(Glu). The sequence is that of Glutamate--tRNA ligase from Burkholderia orbicola (strain AU 1054).